We begin with the raw amino-acid sequence, 189 residues long: Leucine repeat adapter protein 25 (189 aa).

S28 carries the phosphoserine modification. A disordered region spans residues 54–82; that stretch reads ELSRAARAPDGPRHAAGSANSGSAAGPRR. Low complexity predominate over residues 68–79; the sequence is AAGSANSGSAAG. The stretch at 86 to 114 is one LRR repeat; that stretch reads LDSALAALRKEMVGLRQLDMSLLCQLWGL. The tract at residues 136 to 175 is disordered; that stretch reads SSLHSDSSYPPDAGLSDDEEPPDASLPPDPPPLTVPQTHN. Residues 159-169 show a composition bias toward pro residues; sequence ASLPPDPPPLT. S188 carries the post-translational modification Phosphoserine.

The protein belongs to the FAM89 family. In terms of assembly, interacts with SKI. Interacts (via LRR repeat) with CDC42BPA (via AGC-kinase C-terminal domain), CDC42BPB (via AGC-kinase C-terminal domain) and LIMK1 (via LIM zinc-binding domains). Forms a tripartite complex with CDC42BPA, CDC42BPB and LIMK1. As to quaternary structure, (Microbial infection) Interacts with mouse mammary tumor virus (MMTV) envelope glycoprotein gp70. As to expression, widely expressed. Expressed in the early postnatal brain.

It is found in the cytoplasm. The protein resides in the cell projection. Its subcellular location is the lamellipodium. The protein localises to the cell surface. Negatively regulates TGF-beta-induced signaling; in cooperation with SKI prevents the translocation of SMAD2 from the nucleus to the cytoplasm in response to TGF-beta. Acts as an adapter that mediates the specific recognition of LIMK1 by CDC42BPA and CDC42BPB in the lamellipodia. LRAP25-mediated CDC42BPA/CDC42BPB targeting to LIMK1 and the lamellipodium results in LIMK1 activation and the subsequent phosphorylation of CFL1 which is important for lamellipodial F-actin regulation. In terms of biological role, (Microbial infection) May be a receptor for mouse mammary tumor virus (MMTV). This is Leucine repeat adapter protein 25 from Mus musculus (Mouse).